Consider the following 779-residue polypeptide: Probable phosphoketolase 2 (779 aa).

The protein belongs to the XFP family. Thiamine diphosphate serves as cofactor.

The polypeptide is Probable phosphoketolase 2 (Rhizobium meliloti (strain 1021) (Ensifer meliloti)).